We begin with the raw amino-acid sequence, 456 residues long: Exodeoxyribonuclease 7 large subunit (456 aa).

Belongs to the XseA family. As to quaternary structure, heterooligomer composed of large and small subunits.

The protein resides in the cytoplasm. The enzyme catalyses Exonucleolytic cleavage in either 5'- to 3'- or 3'- to 5'-direction to yield nucleoside 5'-phosphates.. Functionally, bidirectionally degrades single-stranded DNA into large acid-insoluble oligonucleotides, which are then degraded further into small acid-soluble oligonucleotides. The sequence is that of Exodeoxyribonuclease 7 large subunit from Lactobacillus johnsonii (strain CNCM I-12250 / La1 / NCC 533).